The sequence spans 324 residues: NAC domain-containing protein 21/22 (324 aa).

One can recognise an NAC domain in the interval 19 to 171 (LPPGFRFHPK…DWVLCRVFHK (153 aa)). Residues 120–137 (RKTLVFYQGRAPRGRKTD) carry the Bipartite nuclear localization signal motif.

As to quaternary structure, dimer. Interacts with SINAT5. Post-translationally, ubiquitinated. The interaction with SINAT5 mediate its proteasome-dependent degradation. In terms of tissue distribution, predominantly expressed in the root tip and in lateral root initiation sites. Also detected in expanding cotyledon, and in leaf primordia.

The protein resides in the nucleus. In terms of biological role, transcriptional activator that mediates auxin signaling to promote lateral root development. Activates the expression of two downstream auxin-responsive genes, DBP and AIR3. The polypeptide is NAC domain-containing protein 21/22 (NAC021) (Arabidopsis thaliana (Mouse-ear cress)).